A 387-amino-acid chain; its full sequence is Muscleblind-like protein 1 (387 aa).

Threonine 6 carries the post-translational modification Phosphothreonine. 4 C3H1-type zinc fingers span residues 13–41, 47–73, 178–206, and 214–240; these read WLTL…HPSK, NGRV…HPPP, TDRL…HPAD, and DNTV…HPPA.

The protein belongs to the muscleblind family. Interacts with DDX1 and YBX1. Interacts with HNRNPH1; the interaction in RNA-independent. Interacts with RBPMS; the interaction allows cooperative assembly of RNA-bound stable cell-specific alternative splicing regulatory complexes.

It localises to the nucleus. The protein resides in the cytoplasm. It is found in the cytoplasmic granule. Functionally, mediates pre-mRNA alternative splicing regulation. Acts either as activator or repressor of splicing on specific pre-mRNA targets. Inhibits cardiac troponin-T (TNNT2) pre-mRNA exon inclusion but induces insulin receptor (IR) pre-mRNA exon inclusion in muscle. Antagonizes the alternative splicing activity pattern of CELF proteins. Regulates the TNNT2 exon 5 skipping through competition with U2AF2. Inhibits the formation of the spliceosome A complex on intron 4 of TNNT2 pre-mRNA. Binds to the stem-loop structure within the polypyrimidine tract of TNNT2 intron 4 during spliceosome assembly. Binds to the 5'-YGCU(U/G)Y-3'consensus sequence. Binds to the IR RNA. Binds to expanded CUG repeat RNA, which folds into a hairpin structure containing GC base pairs and bulged, unpaired U residues. Together with RNA binding proteins RBPMS and RBFOX2, activates vascular smooth muscle cells alternative splicing events. Regulates NCOR2 alternative splicing. The protein is Muscleblind-like protein 1 of Rattus norvegicus (Rat).